Here is a 348-residue protein sequence, read N- to C-terminus: uncharacterized protein (348 aa).

Its function is as follows. May be involved in apoptosis regulation. This is an uncharacterized protein from Rattus norvegicus (Rat).